Consider the following 166-residue polypeptide: MSQFSHYNEDGLPKMVDISSKSATSRTATAECRVRISPRLYEAIHEQSLKKGNPLPVAQVAGIMAAKKTAEWIPMCHPILIQGTDLSFKYEPVKDGYMLVIGATVTVDGNTGVEMEALTAVTAAALTFYDMCKAVDKSMVIEETLLVKKTGGKNGDFYHPRREKMD.

Substrate contacts are provided by residues 75–77 and 115–116; these read MCH and ME. Aspartate 130 is a catalytic residue.

Belongs to the MoaC family. Homohexamer; trimer of dimers.

It carries out the reaction (8S)-3',8-cyclo-7,8-dihydroguanosine 5'-triphosphate = cyclic pyranopterin phosphate + diphosphate. The protein operates within cofactor biosynthesis; molybdopterin biosynthesis. In terms of biological role, catalyzes the conversion of (8S)-3',8-cyclo-7,8-dihydroguanosine 5'-triphosphate to cyclic pyranopterin monophosphate (cPMP). The protein is Cyclic pyranopterin monophosphate synthase of Shouchella clausii (strain KSM-K16) (Alkalihalobacillus clausii).